A 1462-amino-acid polypeptide reads, in one-letter code: Trifunctional nucleotide phosphoesterase protein YfkN (1462 aa).

A signal peptide spans M1 to A35. The interval E36–L623 is 2',3'-cyclic nucleotide 2'-phosphodiesterase/3'-nucleotidase. A divalent metal cation-binding residues include D52, H54, D97, N141, H249, H282, and H284. Residues Y458 and Y561 to G567 contribute to the a ribonucleoside 3'-phosphate site. The tract at residues L624–T1427 is 5'-nucleotidase. A divalent metal cation contacts are provided by D676, H678, D708, N740, H872, H895, and H897. Residues F1047 and F1127 to D1133 each bind a ribonucleoside 5'-phosphate. Positions I1350 to G1422 are disordered. A compositionally biased stretch (gly residues) spans G1405–G1421. The LPXTG sorting signal signature appears at L1424–A1428. T1427 bears the Pentaglycyl murein peptidoglycan amidated threonine mark. Positions A1428–A1462 are cleaved as a propeptide — removed by sortase.

This sequence belongs to the 5'-nucleotidase family. The cofactor is a divalent metal cation.

The protein localises to the secreted. The protein resides in the cell wall. The enzyme catalyses a nucleoside 2',3'-cyclic phosphate + H2O = a nucleoside 3'-phosphate + H(+). It carries out the reaction a ribonucleoside 3'-phosphate + H2O = a ribonucleoside + phosphate. The catalysed reaction is a ribonucleoside 5'-phosphate + H2O = a ribonucleoside + phosphate. Catalyzes the release of inorganic phosphate from 2',3'-cyclic nucleotides through consecutive 2',3'-phosphodiesterase and 3'- (or 2') nucleotidase activities. Also possesses a 5'-nucleotidase activity. Does not catalyze the release of inorganic phosphate from 3',5'-cyclic nucleotides. Probably plays a role in the cellular reprocessing of nucleotides present in the medium, under conditions of phosphate shortage. The polypeptide is Trifunctional nucleotide phosphoesterase protein YfkN (yfkN) (Bacillus subtilis (strain 168)).